A 122-amino-acid polypeptide reads, in one-letter code: UPF0102 protein XOO3839 (122 aa).

The protein belongs to the UPF0102 family.

The chain is UPF0102 protein XOO3839 from Xanthomonas oryzae pv. oryzae (strain KACC10331 / KXO85).